The following is a 470-amino-acid chain: D-serine/D-alanine/glycine transporter (470 aa).

The next 12 membrane-spanning stretches (helical) occupy residues 30–50, 51–71, 102–122, 128–148, 162–182, 211–231, 256–276, 283–303, 350–370, 371–391, 413–433, and 441–461; these read LIAI…KTIS, LAGP…FFVM, FTGW…VVAI, FWFP…LLLV, FWFA…GLVM, LSGF…IELV, IIMF…WSSV, FVEL…NFVV, FSCI…SVIG, AFTM…TIIL, PLGK…LVLL, and QALL…LFIG.

This sequence belongs to the amino acid-polyamine-organocation (APC) superfamily. Amino acid transporter (AAT) (TC 2.A.3.1) family.

It is found in the cell inner membrane. The catalysed reaction is D-alanine(in) + H(+)(in) = D-alanine(out) + H(+)(out). It carries out the reaction D-serine(out) + H(+)(out) = D-serine(in) + H(+)(in). The enzyme catalyses glycine(in) + H(+)(in) = glycine(out) + H(+)(out). It catalyses the reaction D-cycloserine(in) + H(+)(in) = D-cycloserine(out) + H(+)(out). Uptake of D-serine is inhibited by D-alanine, D-cycloserine, glycine and at high concentrations of D-threonine. Permease that is involved in the transport across the cytoplasmic membrane of D-alanine, D-serine and glycine. Is the only transporter of D-alanine. Transports D-serine less efficiently than DsdX. In addition, in minimal media, transports the broad spectrum antibiotic D-cycloserine into the cell. Transports D-cycloserine only in minimal media, and not in a complex medium, suggesting that CycA does not play a role in D-cycloserine transport when E.coli is grown in a complex or biologically relevant medium, probably due to competition from other CycA substrates present in the medium. This Escherichia coli O6:H1 (strain CFT073 / ATCC 700928 / UPEC) protein is D-serine/D-alanine/glycine transporter (cycA).